Reading from the N-terminus, the 127-residue chain is Adult-specific rigid cuticular protein 12.6 (127 aa).

The Chitin-binding type R&amp;R domain maps to 9–87 (GPAYNFGYNT…ALAALAPKAP (79 aa)).

Functionally, component of the rigid cuticle of the spider. The chain is Adult-specific rigid cuticular protein 12.6 from Araneus diadematus (European garden spider).